The sequence spans 379 residues: RIB43A-like with coiled-coils protein 1 (379 aa).

A disordered region spans residues 1-21; the sequence is MYNINQSTDTKEAAAIEARRN. Residues 9 to 21 show a composition bias toward basic and acidic residues; the sequence is DTKEAAAIEARRN. Coiled-coil stretches lie at residues 85-111, 161-241, and 280-304; these read ADRT…GREF, RYNL…KANL, and EQRA…QAEK.

The protein belongs to the RIB43A family. In terms of assembly, microtubule inner protein component of sperm flagellar doublet microtubules.

Its subcellular location is the cytoplasm. The protein resides in the cytoskeleton. It localises to the flagellum axoneme. This Macaca fascicularis (Crab-eating macaque) protein is RIB43A-like with coiled-coils protein 1 (RIBC1).